An 87-amino-acid polypeptide reads, in one-letter code: MDALNSREQQEFQRVVEQKQMKDFMRLYSNLVERCFSDCVNDFTSSKLTSKEQTCIMRCSEKFLKHSERVGQRFQEQNAALNQSMGR.

A Twin CX3C motif motif is present at residues 35-59; it reads CFSDCVNDFTSSKLTSKEQTCIMRC. Cystine bridges form between Cys-35–Cys-59 and Cys-39–Cys-55.

Belongs to the small Tim family. As to quaternary structure, heterohexamer; composed of 3 copies of TIM9 and 3 copies of TIM10, named soluble 70 kDa complex. Associates with the TIM22 complex, whose core is composed of TIM22 and TIM54. Interacts with the transmembrane regions of multi-pass transmembrane proteins in transit.

It localises to the mitochondrion inner membrane. In terms of biological role, mitochondrial intermembrane chaperone that participates in the import and insertion of multi-pass transmembrane proteins into the mitochondrial inner membrane. Also required for the transfer of beta-barrel precursors from the TOM complex to the sorting and assembly machinery (SAM complex) of the outer membrane. Acts as a chaperone-like protein that protects the hydrophobic precursors from aggregation and guide them through the mitochondrial intermembrane space. The sequence is that of Mitochondrial import inner membrane translocase subunit TIM9 (TIM9) from Eremothecium gossypii (strain ATCC 10895 / CBS 109.51 / FGSC 9923 / NRRL Y-1056) (Yeast).